The following is a 312-amino-acid chain: Deoxyribonuclease Tat-D (312 aa).

The a divalent metal cation site is built by glutamate 124, histidine 161, histidine 187, and aspartate 235.

The protein belongs to the metallo-dependent hydrolases superfamily. TatD-type hydrolase family. A divalent metal cation serves as cofactor.

The protein localises to the cytoplasm. The protein resides in the nucleus. Its function is as follows. Has both endo- and exonuclease activities. Incises double-stranded DNA without obvious specificity via its endonuclease activity and excises the DNA from the 3'-to 5'-end by its exonuclease activity. May have a role in apoptosis. The chain is Deoxyribonuclease Tat-D from Schizosaccharomyces pombe (strain 972 / ATCC 24843) (Fission yeast).